A 249-amino-acid polypeptide reads, in one-letter code: Putative S-adenosyl-L-methionine-dependent methyltransferase Mjls_0570 (249 aa).

S-adenosyl-L-methionine is bound by residues aspartate 111 and 141–142 (DL).

The protein belongs to the UPF0677 family.

In terms of biological role, exhibits S-adenosyl-L-methionine-dependent methyltransferase activity. This Mycobacterium sp. (strain JLS) protein is Putative S-adenosyl-L-methionine-dependent methyltransferase Mjls_0570.